Consider the following 271-residue polypeptide: Gasdermin bGSDM (271 aa).

Cysteine 7 carries S-palmitoyl cysteine lipidation. 4 consecutive transmembrane segments (beta stranded) span residues 74-90, 102-120, 168-185, and 194-210; these read IAGT…GLSV, TLGV…FEFS, RINV…GLNL, and ANVK…TVSF.

It belongs to the bacterial gasdermin family. Monomer. As to quaternary structure, forms large, homooligomeric ring-shaped pores when inserted in membranes. In terms of processing, palmitoylation helps stabilize the inactive state; may self palmitoylate. Palmitoylation plays a significant role in pore formation.

It is found in the cytoplasm. It localises to the cell inner membrane. The full-length protein before cleavage is inactive: intramolecular interactions between the N-terminal domain and the C-terminal region as well as the lipid modification, mediate autoinhibition. The pyroptosis-like-inducing activity is carried by the released N-terminal domain (Gasdermin bGSDM, N-terminus). Functionally, involved in defense against bacteriophages. When this probable 4 gene operon (bGSDM-FE772_23060-FE772_23065-FE772_23070) is inserted into E.coli it provides nearly 100-fold protection against phages T5 and T6 and about 8-fold against phage T4. The operon without bGSDM no longer protects against phage. Cleavage of this precursor by its dedicated protease(s) releases the active moiety (gasdermin bGSDM, N-terminus) which inserts into membranes, forming pores and triggering cell death. Its function is as follows. Pore-forming protein that causes membrane permeabilization via a pyroptosis-like activity. Makes ring-like pores when released. This chain is Gasdermin bGSDM, found in Lysobacter enzymogenes.